The chain runs to 202 residues: GTP cyclohydrolase 1 (202 aa).

Zn(2+) contacts are provided by cysteine 90, histidine 93, and cysteine 163.

Belongs to the GTP cyclohydrolase I family. In terms of assembly, homomer.

The catalysed reaction is GTP + H2O = 7,8-dihydroneopterin 3'-triphosphate + formate + H(+). It participates in cofactor biosynthesis; 7,8-dihydroneopterin triphosphate biosynthesis; 7,8-dihydroneopterin triphosphate from GTP: step 1/1. In Mycolicibacterium gilvum (strain PYR-GCK) (Mycobacterium gilvum (strain PYR-GCK)), this protein is GTP cyclohydrolase 1.